Reading from the N-terminus, the 425-residue chain is C2H2 type master regulator of conidiophore development brlA (425 aa).

Disordered regions lie at residues 28 to 72 (MASS…RHTG), 232 to 257 (KTHSPTTPVRSCSLGTTSGTDTPMSR), and 281 to 301 (VQRQPSRKVARKQSSKQSLSL). Over residues 30–44 (SSFSPMESPTPTPTS) the composition is skewed to low complexity. Over residues 232–256 (KTHSPTTPVRSCSLGTTSGTDTPMS) the composition is skewed to polar residues. Residues 285-294 (PSRKVARKQS) are compositionally biased toward basic residues. 2 C2H2-type zinc fingers span residues 321–345 (KGRFKRQEHLKRHMKSHSKEKPHVC) and 351–376 (ERAFSRSDNLNAHYTKTHSKRGGRNR). Basic residues predominate over residues 365–374 (TKTHSKRGGR). The segment at 365 to 425 (TKTHSKRGGR…RETSEEAWLE (61 aa)) is disordered.

It localises to the nucleus. Functionally, brlA, abaA and wetA are pivotal regulators of conidiophore development and conidium maturation. They act individually and together to regulate their own expression and that of numerous other sporulation-specific genes. Binds promoters of target genes at brlA response elements (BREs) containing the conserved sequence 5'-(C/A)(A/G)AGGG(G/A)-3'. Also coordinates the expression of carbohydrate-active enzymes and of the key effectors of cell wall remodeling during autolysis. The chain is C2H2 type master regulator of conidiophore development brlA from Aspergillus niger (strain ATCC MYA-4892 / CBS 513.88 / FGSC A1513).